Reading from the N-terminus, the 256-residue chain is Ubiquinone/menaquinone biosynthesis C-methyltransferase UbiE (256 aa).

S-adenosyl-L-methionine contacts are provided by residues T79, D100, and 128–129 (DA).

Belongs to the class I-like SAM-binding methyltransferase superfamily. MenG/UbiE family.

The enzyme catalyses a 2-demethylmenaquinol + S-adenosyl-L-methionine = a menaquinol + S-adenosyl-L-homocysteine + H(+). The catalysed reaction is a 2-methoxy-6-(all-trans-polyprenyl)benzene-1,4-diol + S-adenosyl-L-methionine = a 5-methoxy-2-methyl-3-(all-trans-polyprenyl)benzene-1,4-diol + S-adenosyl-L-homocysteine + H(+). The protein operates within quinol/quinone metabolism; menaquinone biosynthesis; menaquinol from 1,4-dihydroxy-2-naphthoate: step 2/2. Its pathway is cofactor biosynthesis; ubiquinone biosynthesis. Functionally, methyltransferase required for the conversion of demethylmenaquinol (DMKH2) to menaquinol (MKH2) and the conversion of 2-polyprenyl-6-methoxy-1,4-benzoquinol (DDMQH2) to 2-polyprenyl-3-methyl-6-methoxy-1,4-benzoquinol (DMQH2). This chain is Ubiquinone/menaquinone biosynthesis C-methyltransferase UbiE, found in Ectopseudomonas mendocina (strain ymp) (Pseudomonas mendocina).